Consider the following 316-residue polypeptide: MTAAPLKVAFAGTPEFAAAALEAILAAGFEVPLVLTQPDRPAGRGMKLSPSPVKQLALAHGIAVDQPSSLRGEEQRATLAACAPDVLVVAAYGLILPRAVLDLPRFGCLNIHASLLPRWRGAAPIHRAIEAGDTETGITIMQMDEGLDTGPMLMKHAVPIGPADTTGALHDRLAALGAQMIVEALRRLPSGELVAMPQPAEGATYAGKIGKAEAVIDWQCDASSVARAVRAFNPFPGAVASLRQVPLKIWFAEPVAGHGEPGTVLVADADGIVVACGTQAVRLAQLQKPGSRRLAAGEFLRGFPVSAGERFEAAAR.

114–117 contacts (6S)-5,6,7,8-tetrahydrofolate; the sequence is SLLP.

It belongs to the Fmt family.

It carries out the reaction L-methionyl-tRNA(fMet) + (6R)-10-formyltetrahydrofolate = N-formyl-L-methionyl-tRNA(fMet) + (6S)-5,6,7,8-tetrahydrofolate + H(+). In terms of biological role, attaches a formyl group to the free amino group of methionyl-tRNA(fMet). The formyl group appears to play a dual role in the initiator identity of N-formylmethionyl-tRNA by promoting its recognition by IF2 and preventing the misappropriation of this tRNA by the elongation apparatus. The sequence is that of Methionyl-tRNA formyltransferase from Aromatoleum aromaticum (strain DSM 19018 / LMG 30748 / EbN1) (Azoarcus sp. (strain EbN1)).